A 228-amino-acid chain; its full sequence is uncharacterized protein (228 aa).

ATP is bound at residue 21-28; sequence GMIALGKT.

This is an uncharacterized protein from Mycoplasma genitalium (strain ATCC 33530 / DSM 19775 / NCTC 10195 / G37) (Mycoplasmoides genitalium).